Here is an 88-residue protein sequence, read N- to C-terminus: Small ribosomal subunit protein uS17 (88 aa).

The protein belongs to the universal ribosomal protein uS17 family. In terms of assembly, part of the 30S ribosomal subunit.

Its function is as follows. One of the primary rRNA binding proteins, it binds specifically to the 5'-end of 16S ribosomal RNA. The chain is Small ribosomal subunit protein uS17 from Pseudomonas aeruginosa (strain LESB58).